A 229-amino-acid chain; its full sequence is Large ribosomal subunit protein uL1 (229 aa).

It belongs to the universal ribosomal protein uL1 family. Part of the 50S ribosomal subunit.

In terms of biological role, binds directly to 23S rRNA. The L1 stalk is quite mobile in the ribosome, and is involved in E site tRNA release. Functionally, protein L1 is also a translational repressor protein, it controls the translation of the L11 operon by binding to its mRNA. In Clostridium tetani (strain Massachusetts / E88), this protein is Large ribosomal subunit protein uL1.